The primary structure comprises 151 residues: 3-hydroxyacyl-[acyl-carrier-protein] dehydratase FabZ (151 aa).

The active site involves His-54.

Belongs to the thioester dehydratase family. FabZ subfamily.

The protein localises to the cytoplasm. The catalysed reaction is a (3R)-hydroxyacyl-[ACP] = a (2E)-enoyl-[ACP] + H2O. Involved in unsaturated fatty acids biosynthesis. Catalyzes the dehydration of short chain beta-hydroxyacyl-ACPs and long chain saturated and unsaturated beta-hydroxyacyl-ACPs. This Sodalis glossinidius (strain morsitans) protein is 3-hydroxyacyl-[acyl-carrier-protein] dehydratase FabZ.